The following is a 37-amino-acid chain: Large ribosomal subunit protein bL36c (37 aa).

The protein belongs to the bacterial ribosomal protein bL36 family.

It localises to the plastid. It is found in the chloroplast. This is Large ribosomal subunit protein bL36c from Jasminum nudiflorum (Winter jasmine).